Reading from the N-terminus, the 152-residue chain is Ribonuclease pancreatic (152 aa).

An N-terminal signal peptide occupies residues Met1–Gly24. Lys31 and Arg34 together coordinate substrate. Residue His36 is the Proton acceptor of the active site. An N-linked (GlcNAc...) asparagine glycan is attached at Asn46. 4 cysteine pairs are disulfide-bonded: Cys50–Cys108, Cys64–Cys119, Cys82–Cys134, and Cys89–Cys96. Substrate contacts are provided by residues Lys65–Thr69, Lys90, and Arg109. A glycan (N-linked (GlcNAc...) asparagine) is linked at Asn112. His143 acts as the Proton donor in catalysis.

The protein belongs to the pancreatic ribonuclease family. In terms of assembly, monomer. Interacts with and forms tight 1:1 complexes with RNH1. Dimerization of two such complexes may occur. Interaction with RNH1 inhibits this protein.

Its subcellular location is the secreted. The catalysed reaction is an [RNA] containing cytidine + H2O = an [RNA]-3'-cytidine-3'-phosphate + a 5'-hydroxy-ribonucleotide-3'-[RNA].. It carries out the reaction an [RNA] containing uridine + H2O = an [RNA]-3'-uridine-3'-phosphate + a 5'-hydroxy-ribonucleotide-3'-[RNA].. In terms of biological role, endonuclease that catalyzes the cleavage of RNA on the 3' side of pyrimidine nucleotides. Acts on single-stranded and double-stranded RNA. The polypeptide is Ribonuclease pancreatic (RNASE1) (Papio hamadryas (Hamadryas baboon)).